Consider the following 466-residue polypeptide: Asparagine--tRNA ligase (466 aa).

It belongs to the class-II aminoacyl-tRNA synthetase family. Homodimer.

Its subcellular location is the cytoplasm. It carries out the reaction tRNA(Asn) + L-asparagine + ATP = L-asparaginyl-tRNA(Asn) + AMP + diphosphate + H(+). The polypeptide is Asparagine--tRNA ligase (Shewanella sediminis (strain HAW-EB3)).